Reading from the N-terminus, the 647-residue chain is Pollen receptor-like kinase 2 (647 aa).

A signal peptide spans 1 to 21 (MESKCLMFVSIVSVFFMVVNG). 5 LRR repeats span residues 87 to 109 (LNSL…EFKK), 110 to 134 (LVAL…AFDG), 136 to 159 (GWLK…LVKS), 161 to 183 (KLIE…RHHP), and 185 to 203 (MLNL…SFST). The chain crosses the membrane as a helical span at residues 248–268 (IVAAAVAALAASLIIIGVVIF). One can recognise a Protein kinase domain in the interval 338-613 (KASAEILGSG…EAVEKMEDLM (276 aa)). Phosphoserine is present on Ser-340. ATP contacts are provided by residues 344–352 (LGSGCFGAS) and Lys-366. Ser-418 is modified (phosphoserine). Residue Thr-438 is modified to Phosphothreonine. Tyr-508 carries the post-translational modification Phosphotyrosine. The segment at 620 to 647 (DDDFYSTYASEADGRSSRGLSSEGINLS) is disordered. The span at 637–647 (RGLSSEGINLS) shows a compositional bias: polar residues.

This sequence belongs to the protein kinase superfamily. Ser/Thr protein kinase family. In terms of assembly, part of a complex containing ROPGEF1 and ARAC11/ROP1. The interaction between PRK2, ROPGEF1 and ARAC11/ROP1 is phosphorylation-independent. Interacts with ROPGEF12 (via C-terminus). Interacts with ROPGEF1 (via PRONE domain). Expressed in pollen and/or in flowers, but not in leaves. Expressed in pollen tube.

It localises to the cell membrane. It catalyses the reaction L-seryl-[protein] + ATP = O-phospho-L-seryl-[protein] + ADP + H(+). The catalysed reaction is L-threonyl-[protein] + ATP = O-phospho-L-threonyl-[protein] + ADP + H(+). The phosphorylation activity is calcium-independent. Functionally, receptor-like kinase involved in the control of pollen germination and pollen tube polar growth. Phosphorylates ROPGEF1 in its C-terminal region, releasing its auto-inhibition, and thereby activating the ROP1 signaling pathway. May act as a scaffolding protein, recruiting ROPGEF12 to the plasma membrane by binding to its C-terminal domain. Phosphorylates ROPGEF12, releasing its auto-inhibition. The chain is Pollen receptor-like kinase 2 from Arabidopsis thaliana (Mouse-ear cress).